Here is a 1172-residue protein sequence, read N- to C-terminus: NACHT, LRR and PYD domains-containing protein 1b allele 3 (1172 aa).

The disordered stretch occupies residues 1–22; sequence MEESPPKQKSNTKVAQHEGQQD. Residues 126–435 enclose the NACHT domain; sequence QLVIIEGAAG…EFFAAISCIL (310 aa). 132-139 serves as a coordination point for ATP; that stretch reads GAAGIGKS. 2 LRR repeats span residues 627 to 647 and 684 to 704; these read NLEG…QSLC and SLTE…RMLC. The tract at residues 789 to 922 is ZU5; sequence FWGPTGPVAT…GYTVLKNPSF (134 aa). The region spanning 789 to 1072 is the FIIND domain; that stretch reads FWGPTGPVAT…LRPALPRIAQ (284 aa). Positions 923–1072 are UPA; the sequence is SPMGDVLRII…LRPALPRIAQ (150 aa). The CARD domain occupies 1082–1165; the sequence is HFMDQHREQL…HLVMDLLEKS (84 aa).

Belongs to the NLRP family. Post-translationally, in contrast to allele 1 and 2, not able to mediate autocatalytic cleavage. As to expression, expressed in macrophages.

The protein resides in the cytoplasm. It is found in the cytosol. With respect to regulation, in contrast to allele 1, does not undergo autocatalytic cleavage within the FIIND domain and its mode of activation remains unclear. In contrast to alleles 1 and 2, allele 3 is not activated by Val-boroPro (Talabostat, PT-100). Not activated by cleavage by B.anthracis lethal toxin (LT) endopeptidase. Not activated by metabolic inhibitors, such as 2-deoxy-D-glucose and sodium azide. In terms of biological role, may act as the sensor component of the Nlrp1b inflammasome, which mediates inflammasome activation in response to various pathogen-associated signals, leading to subsequent pyroptosis. Inflammasomes are supramolecular complexes that assemble in the cytosol in response to pathogens and other damage-associated signals and play critical roles in innate immunity and inflammation. May act as a recognition receptor (PRR), which recognizes specific pathogens and other damage-associated signals and forms an inflammasome complex: the inflammasome directly recruits pro-caspase-1 (proCASP1) independently of PYCARD/ASC and promotes caspase-1 (CASP1) activation, which subsequently cleaves and activates inflammatory cytokines IL1B and IL18 and gasdermin-D (GSDMD), leading to pyroptosis. In the absence of GSDMD expression, the Nlrp1b inflammasome is able to recruit and activate CASP8, leading to activation of gasdermin-E (GSDME). Contrary to Nlrp1b allele 1, allele 3 is not activated by Bacillus anthracis lethal toxin. The absence of autocatalytic cleavage within the FIIND domain, which regulates activation in other alleles, suggests that allele 3 may be non-functional. This Mus musculus (Mouse) protein is NACHT, LRR and PYD domains-containing protein 1b allele 3.